The sequence spans 405 residues: Arginine deiminase (405 aa).

Residue Cys395 is the Amidino-cysteine intermediate of the active site.

The protein belongs to the arginine deiminase family.

The protein resides in the cytoplasm. The enzyme catalyses L-arginine + H2O = L-citrulline + NH4(+). Its pathway is amino-acid degradation; L-arginine degradation via ADI pathway; carbamoyl phosphate from L-arginine: step 1/2. The polypeptide is Arginine deiminase (Rhodococcus erythropolis (strain PR4 / NBRC 100887)).